The sequence spans 341 residues: L-threonine 3-dehydrogenase (341 aa).

Cys-38 contacts Zn(2+). Active-site charge relay system residues include Thr-40 and His-43. Zn(2+)-binding residues include His-63, Glu-64, Cys-93, Cys-96, Cys-99, and Cys-107. NAD(+) is bound by residues Ile-175, Asp-195, Arg-200, 262–264 (LGI), and 286–287 (IY).

Belongs to the zinc-containing alcohol dehydrogenase family. Homotetramer. It depends on Zn(2+) as a cofactor.

The protein resides in the cytoplasm. The enzyme catalyses L-threonine + NAD(+) = (2S)-2-amino-3-oxobutanoate + NADH + H(+). It participates in amino-acid degradation; L-threonine degradation via oxydo-reductase pathway; glycine from L-threonine: step 1/2. Functionally, catalyzes the NAD(+)-dependent oxidation of L-threonine to 2-amino-3-ketobutyrate. This chain is L-threonine 3-dehydrogenase, found in Photorhabdus laumondii subsp. laumondii (strain DSM 15139 / CIP 105565 / TT01) (Photorhabdus luminescens subsp. laumondii).